The primary structure comprises 295 residues: ATP synthase gamma chain (295 aa).

This sequence belongs to the ATPase gamma chain family. As to quaternary structure, F-type ATPases have 2 components, CF(1) - the catalytic core - and CF(0) - the membrane proton channel. CF(1) has five subunits: alpha(3), beta(3), gamma(1), delta(1), epsilon(1). CF(0) has three main subunits: a, b and c.

It is found in the cell membrane. Its function is as follows. Produces ATP from ADP in the presence of a proton gradient across the membrane. The gamma chain is believed to be important in regulating ATPase activity and the flow of protons through the CF(0) complex. This Caldanaerobacter subterraneus subsp. tengcongensis (strain DSM 15242 / JCM 11007 / NBRC 100824 / MB4) (Thermoanaerobacter tengcongensis) protein is ATP synthase gamma chain.